Here is a 213-residue protein sequence, read N- to C-terminus: Uridine kinase (213 aa).

An ATP-binding site is contributed by 15 to 22 (GASASGKS).

It belongs to the uridine kinase family.

It is found in the cytoplasm. The catalysed reaction is uridine + ATP = UMP + ADP + H(+). The enzyme catalyses cytidine + ATP = CMP + ADP + H(+). It participates in pyrimidine metabolism; CTP biosynthesis via salvage pathway; CTP from cytidine: step 1/3. Its pathway is pyrimidine metabolism; UMP biosynthesis via salvage pathway; UMP from uridine: step 1/1. The polypeptide is Uridine kinase (Erwinia tasmaniensis (strain DSM 17950 / CFBP 7177 / CIP 109463 / NCPPB 4357 / Et1/99)).